The primary structure comprises 711 residues: Origin recognition complex subunit 3 (711 aa).

Residues Ser-23 and Ser-516 each carry the phosphoserine modification.

It belongs to the ORC3 family. In terms of assembly, component of ORC, a complex composed of at least 6 subunits: ORC1, ORC2, ORC3, ORC4, ORC5 and ORC6. ORC is regulated in a cell-cycle dependent manner. It is sequentially assembled at the exit from anaphase of mitosis and disassembled as cells enter S phase. Post-translationally, multi-mono-ubiquitinated by OBI1; ubiquitination is important for efficient DNA replication origin site activation. Ubiquitination levels are low in mitotic and early G1-phAse cells and are induced in late G1-/early S-phase, peaking in S-phase and decrease toward the end of the cell cycle.

It is found in the nucleus. The protein resides in the chromosome. Functionally, component of the origin recognition complex (ORC) that binds origins of replication. DNA-binding is ATP-dependent. The specific DNA sequences that define origins of replication have not been identified yet. ORC is required to assemble the pre-replication complex necessary to initiate DNA replication. Binds histone H3 and H4 trimethylation marks H3K9me3, H3K27me3 and H4K20me3. This is Origin recognition complex subunit 3 (ORC3) from Homo sapiens (Human).